The chain runs to 64 residues: Large ribosomal subunit protein bL35 (64 aa).

Belongs to the bacterial ribosomal protein bL35 family.

The sequence is that of Large ribosomal subunit protein bL35 from Ureaplasma urealyticum serovar 10 (strain ATCC 33699 / Western).